The sequence spans 100 residues: Class II hydrophobin CU (100 aa).

A signal peptide spans 1–25 (MQFSIATIALFLSSAMAAPYSGNSN). Cystine bridges form between Cys-32–Cys-82, Cys-42–Cys-72, Cys-43–Cys-55, and Cys-83–Cys-94.

Belongs to the cerato-ulmin hydrophobin family. In terms of assembly, homotetramer. Further self-assembles to form highly ordered films at water-air interfaces through intermolecular interactions.

The protein resides in the secreted. The protein localises to the cell wall. Functionally, aerial growth, conidiation, and dispersal of filamentous fungi in the environment rely upon a capability of their secreting small amphipathic proteins called hydrophobins (HPBs) with low sequence identity. Class I can self-assemble into an outermost layer of rodlet bundles on aerial cell surfaces, conferring cellular hydrophobicity that supports fungal growth, development and dispersal; whereas Class II form highly ordered films at water-air interfaces through intermolecular interactions but contribute nothing to the rodlet structure. CU is a class II hydrophobin that is implicated in the pathogenicity of this fungus on elm trees. Required for hydrophobicity and adherence of the cells and acts as a parasitic fitness factor by protecting infectious propagules from desiccation. Reduces the interfacial tension of both oil-water and air-water interfaces. The sequence is that of Class II hydrophobin CU from Ophiostoma ulmi (Dutch elm disease fungus).